We begin with the raw amino-acid sequence, 233 residues long: MAAVSEVEVDGVVFPPVARPPGSGHAHFLAGAGVRGVEIAGNFIKFTAIGVYLEEGAAVPALAKKWAGKSADELAADAAFFRDVVTGDFEKFTRVTMILPLTGEQYSDKVTENCVAAWKAAGVYTDAEGAAADKFKEAFKPHSFPPGASILFTHSPPGVLTVAFSKDSSVPEGAVAAAAIENRALCEAVLDSIIGEHGVSPAAKRSIAARVSQLLKAESTGDVAAAEPAPVSA.

Substrate contacts are provided by T47, N113, and S192.

Belongs to the chalcone isomerase family.

It carries out the reaction a chalcone = a flavanone.. The protein operates within secondary metabolite biosynthesis; flavonoid biosynthesis. Catalyzes the intramolecular cyclization of bicyclic chalcones into tricyclic (S)-flavanones. Responsible for the isomerization of 4,2',4',6'-tetrahydroxychalcone (also termed chalcone) into naringenin. The chain is Chalcone--flavanone isomerase (CHI) from Oryza sativa subsp. japonica (Rice).